The following is a 366-amino-acid chain: Erythronate-4-phosphate dehydrogenase (366 aa).

The substrate site is built by serine 46 and threonine 67. Positions 147 and 175 each coordinate NAD(+). Arginine 208 is an active-site residue. Residue aspartate 228 coordinates NAD(+). Glutamate 233 is an active-site residue. Residue histidine 250 is the Proton donor of the active site. Glycine 253 is a binding site for NAD(+). A substrate-binding site is contributed by tyrosine 254.

The protein belongs to the D-isomer specific 2-hydroxyacid dehydrogenase family. PdxB subfamily. As to quaternary structure, homodimer.

It is found in the cytoplasm. It carries out the reaction 4-phospho-D-erythronate + NAD(+) = (R)-3-hydroxy-2-oxo-4-phosphooxybutanoate + NADH + H(+). It participates in cofactor biosynthesis; pyridoxine 5'-phosphate biosynthesis; pyridoxine 5'-phosphate from D-erythrose 4-phosphate: step 2/5. In terms of biological role, catalyzes the oxidation of erythronate-4-phosphate to 3-hydroxy-2-oxo-4-phosphonooxybutanoate. The chain is Erythronate-4-phosphate dehydrogenase from Coxiella burnetii (strain RSA 331 / Henzerling II).